Consider the following 422-residue polypeptide: Tyrosine--tRNA ligase (422 aa).

Tyr-37 contributes to the L-tyrosine binding site. Residues 42–51 (PTEESLHIGH) carry the 'HIGH' region motif. Tyr-175 and Gln-179 together coordinate L-tyrosine. Positions 235 to 239 (KFGKT) match the 'KMSKS' region motif. An ATP-binding site is contributed by Lys-238. The region spanning 357–414 (KDLQEALVLTSLAQSRTQAKNMIISNSISINTEKIRKNHIFHEKDKLFGKFTLLSRGK) is the S4 RNA-binding domain.

The protein belongs to the class-I aminoacyl-tRNA synthetase family. TyrS type 1 subfamily. Homodimer.

It localises to the cytoplasm. The enzyme catalyses tRNA(Tyr) + L-tyrosine + ATP = L-tyrosyl-tRNA(Tyr) + AMP + diphosphate + H(+). Functionally, catalyzes the attachment of tyrosine to tRNA(Tyr) in a two-step reaction: tyrosine is first activated by ATP to form Tyr-AMP and then transferred to the acceptor end of tRNA(Tyr). This chain is Tyrosine--tRNA ligase, found in Buchnera aphidicola subsp. Acyrthosiphon pisum (strain APS) (Acyrthosiphon pisum symbiotic bacterium).